Here is a 237-residue protein sequence, read N- to C-terminus: Phosphoserine phosphatase (237 aa).

Residue D39 is the Nucleophile of the active site. The Mg(2+) site is built by D39 and E41. E41 serves as the catalytic Proton donor. Substrate-binding positions include E47, R78, 122 to 123, and K165; that span reads SD. Position 184 (D184) interacts with Mg(2+). N187 is a substrate binding site.

It belongs to the thrH family. The cofactor is Mg(2+).

The enzyme catalyses O-phospho-L-serine + H2O = L-serine + phosphate. It catalyses the reaction O-phospho-D-serine + H2O = D-serine + phosphate. The protein operates within amino-acid biosynthesis; L-serine biosynthesis; L-serine from 3-phospho-D-glycerate: step 3/3. Phosphoserine phosphatase that mediates dephosphorylation of phosphoserine in the serine biosynthesis pathway. Also able to dephosphorylate phospho-threonine. The chain is Phosphoserine phosphatase from Pseudomonas syringae pv. tomato (strain ATCC BAA-871 / DC3000).